A 130-amino-acid polypeptide reads, in one-letter code: Small ribosomal subunit protein uS9 (130 aa).

This sequence belongs to the universal ribosomal protein uS9 family.

The protein is Small ribosomal subunit protein uS9 of Paraburkholderia phymatum (strain DSM 17167 / CIP 108236 / LMG 21445 / STM815) (Burkholderia phymatum).